A 341-amino-acid polypeptide reads, in one-letter code: Farnesyl pyrophosphate synthase 2 (341 aa).

Positions 46, 49, and 85 each coordinate isopentenyl diphosphate. Mg(2+)-binding residues include aspartate 92 and aspartate 96. Arginine 101 is a dimethylallyl diphosphate binding site. Arginine 102 contacts isopentenyl diphosphate. Dimethylallyl diphosphate-binding residues include lysine 189, threonine 190, glutamine 228, lysine 245, and lysine 254.

Belongs to the FPP/GGPP synthase family. Mg(2+) serves as cofactor. As to expression, mainly expressed in trichomes, roots and flowers, and, to a lower extent, in leaves and stems.

It localises to the cytoplasm. Its subcellular location is the nucleus. The enzyme catalyses isopentenyl diphosphate + dimethylallyl diphosphate = (2E)-geranyl diphosphate + diphosphate. The catalysed reaction is isopentenyl diphosphate + (2E)-geranyl diphosphate = (2E,6E)-farnesyl diphosphate + diphosphate. The protein operates within isoprenoid biosynthesis; farnesyl diphosphate biosynthesis; farnesyl diphosphate from geranyl diphosphate and isopentenyl diphosphate: step 1/1. It participates in sesquiterpene biosynthesis. Its pathway is isoprenoid biosynthesis; geranyl diphosphate biosynthesis; geranyl diphosphate from dimethylallyl diphosphate and isopentenyl diphosphate: step 1/1. Its function is as follows. Catalyzes the sequential condensation of isopentenyl pyrophosphate with the allylic pyrophosphates, dimethylallyl pyrophosphate, and then with the resultant geranylpyrophosphate to the ultimate product farnesyl pyrophosphate. In Cannabis sativa (Hemp), this protein is Farnesyl pyrophosphate synthase 2.